Reading from the N-terminus, the 79-residue chain is Sec-independent protein translocase protein TatA (79 aa).

A helical transmembrane segment spans residues 1-21; the sequence is MGGLQPWHWVIVIAVFVLLFG. Basic and acidic residues predominate over residues 43–52; sequence IKEMQSEGKS. The segment at 43-79 is disordered; sequence IKEMQSEGKSDNPPATPITSERVDTNPTAEQPDKRSA.

The protein belongs to the TatA/E family. As to quaternary structure, the Tat system comprises two distinct complexes: a TatABC complex, containing multiple copies of TatA, TatB and TatC subunits, and a separate TatA complex, containing only TatA subunits. Substrates initially bind to the TatABC complex, which probably triggers association of the separate TatA complex to form the active translocon.

It localises to the cell membrane. Its function is as follows. Part of the twin-arginine translocation (Tat) system that transports large folded proteins containing a characteristic twin-arginine motif in their signal peptide across membranes. TatA could form the protein-conducting channel of the Tat system. The polypeptide is Sec-independent protein translocase protein TatA (Mycobacterium sp. (strain JLS)).